Consider the following 171-residue polypeptide: WYSSMFAANIKEEPMSHHHHHSHHSHGHHHSNSNSNASSPRQSPLPSPNPPSSSNLHLEQYLKQQQQHQQQQQQPMDTPLPLTPPGLPNPMQIIMPANMRPATQPTPTIATPTTTSSAIVALQSNDKLQALTPPMDVTPPKSAAKSQQSWAEPEKDHDLMSNSSEDMKYMA.

Disordered regions lie at residues 14–93 and 124–171; these read PMSH…PMQI and SNDK…KYMA. Residues 17–31 show a composition bias toward basic residues; the sequence is HHHHHSHHSHGHHHS. Composition is skewed to low complexity over residues 32-42 and 52-80; these read NSNSNASSPRQ and SSSN…DTPL. Over residues 152 to 171 the composition is skewed to basic and acidic residues; it reads EPEKDHDLMSNSSEDMKYMA.

The protein belongs to the hunchback C2H2-type zinc-finger protein family.

The protein localises to the nucleus. Gap class segmentation protein that controls development of head structures. The chain is Protein hunchback (hb) from Scaptomyza albovittata (Fruit fly).